The following is a 576-amino-acid chain: Putative export ATP-binding/permease protein RF_0214 (576 aa).

An ABC transmembrane type-1 domain is found at 20–303 (LIIVMISLLS…IFELLSEIHL (284 aa)). Helical transmembrane passes span 21 to 41 (IIVM…GSVF), 61 to 81 (ILYI…RSYF), 135 to 155 (FLSF…LMFF), 158 to 178 (FKLA…LIKF), 242 to 262 (ALFF…VVWI), and 277 to 297 (IISF…IFEL). In terms of domain architecture, ABC transporter spans 336-572 (IEFKNVDFTY…SEIYRNICRE (237 aa)). 371–378 (GRSGGGKS) contacts ATP.

It belongs to the ABC transporter superfamily. As to quaternary structure, homodimer.

Its subcellular location is the cell inner membrane. Its function is as follows. Part of an ABC transporter complex. Transmembrane domains (TMD) form a pore in the inner membrane and the ATP-binding domain (NBD) is responsible for energy generation. The polypeptide is Putative export ATP-binding/permease protein RF_0214 (Rickettsia felis (strain ATCC VR-1525 / URRWXCal2) (Rickettsia azadi)).